The chain runs to 466 residues: Ribulose bisphosphate carboxylase large chain (466 aa).

N6,N6,N6-trimethyllysine is present on lysine 5. 2 residues coordinate substrate: asparagine 114 and threonine 164. Lysine 166 acts as the Proton acceptor in catalysis. Position 168 (lysine 168) interacts with substrate. Residues lysine 192, aspartate 194, and glutamate 195 each contribute to the Mg(2+) site. Lysine 192 bears the N6-carboxylysine mark. Catalysis depends on histidine 285, which acts as the Proton acceptor. Positions 286, 318, and 370 each coordinate substrate.

Belongs to the RuBisCO large chain family. Type I subfamily. As to quaternary structure, heterohexadecamer of 8 large chains and 8 small chains; disulfide-linked. The disulfide link is formed within the large subunit homodimers. Mg(2+) serves as cofactor. Post-translationally, the disulfide bond which can form in the large chain dimeric partners within the hexadecamer appears to be associated with oxidative stress and protein turnover.

The protein localises to the plastid. Its subcellular location is the chloroplast. The catalysed reaction is 2 (2R)-3-phosphoglycerate + 2 H(+) = D-ribulose 1,5-bisphosphate + CO2 + H2O. It carries out the reaction D-ribulose 1,5-bisphosphate + O2 = 2-phosphoglycolate + (2R)-3-phosphoglycerate + 2 H(+). Functionally, ruBisCO catalyzes two reactions: the carboxylation of D-ribulose 1,5-bisphosphate, the primary event in carbon dioxide fixation, as well as the oxidative fragmentation of the pentose substrate in the photorespiration process. Both reactions occur simultaneously and in competition at the same active site. This is Ribulose bisphosphate carboxylase large chain from Silene gallica (Common catchfly).